The following is a 55-amino-acid chain: Large ribosomal subunit protein bL33 (55 aa).

Belongs to the bacterial ribosomal protein bL33 family.

This Rhizobium etli (strain CIAT 652) protein is Large ribosomal subunit protein bL33.